The chain runs to 776 residues: Microtubule-associated protein tau (776 aa).

Basic and acidic residues predominate over residues 1–26 (MAEPRQEFEVMEDHAGTYGLGDRKDQ). 2 disordered regions span residues 1 to 263 (MAEP…PAKG) and 276 to 591 (STEI…LKNV). Residue Ala-2 is modified to N-acetylalanine. A phosphotyrosine mark is found at Tyr-18 and Tyr-29. Lys-44 is covalently cross-linked (Glycyl lysine isopeptide (Lys-Gly) (interchain with G-Cter in ubiquitin)). Residues Ser-46 and Ser-61 each carry the phosphoserine modification. Over residues 61–71 (SETSDAKSTPT) the composition is skewed to polar residues. Phosphothreonine occurs at positions 69, 71, and 111. Composition is skewed to basic and acidic residues over residues 179 to 189 (EGGRHAPELLK) and 207 to 216 (GGKERPGSKE). At Ser-214 the chain carries Phosphoserine. Over residues 217-228 (EVDEDRDVDESS) the composition is skewed to acidic residues. Over residues 314–323 (EQAHSEEHLG) the composition is skewed to basic and acidic residues. The span at 324–340 (RAAFPGAPGEGPEARGP) shows a compositional bias: low complexity. 2 stretches are compositionally biased toward basic and acidic residues: residues 344-356 (EDTK…ESSE) and 381-393 (KSKD…DKKA). Over residues 440-452 (KYVSSVTPRTGSS) the composition is skewed to polar residues. The span at 455-466 (KEMKLKGADGKT) shows a compositional bias: basic and acidic residues. At Thr-470 the chain carries Phosphothreonine. Arg-472 carries the omega-N-methylarginine modification. At Lys-480 the chain carries N6,N6-dimethyllysine; alternate. Residue Lys-480 is modified to N6-acetyllysine; alternate. 3 positions are modified to phosphothreonine: Thr-486, Thr-492, and Thr-498. Ser-502, Ser-526, and Ser-530 each carry phosphoserine. Basic and acidic residues predominate over residues 517–528 (RSERGEPPKSGD). The segment covering 529-549 (RSGYSSPGSPGTPGSRSRTPS) has biased composition (low complexity). Tyr-532 bears the Phosphotyrosine mark. Phosphoserine is present on residues Ser-533, Ser-534, and Ser-537. Phosphothreonine is present on residues Thr-540 and Thr-547. At Ser-549 the chain carries Phosphoserine. Thr-552 is subject to Phosphothreonine. Lys-560 is subject to N6-acetyllysine. Thr-566 bears the Phosphothreonine mark. 2 positions are modified to phosphoserine: Ser-570 and Ser-572. Tau/MAP repeat units follow at residues 579–609 (QTAP…GGGK), 610–640 (VQII…GGGS), 641–671 (VQIV…GGGQ), and 672–703 (VEVK…GGGN). A Glycyl lysine isopeptide (Lys-Gly) (interchain with G-Cter in ubiquitin) cross-link involves residue Lys-589. At Lys-594 the chain carries N6-acetyllysine; alternate. Position 594 is an N6-methyllysine; alternate (Lys-594). Lys-594 participates in a covalent cross-link: Glycyl lysine isopeptide (Lys-Gly) (interchain with G-Cter in ubiquitin); alternate. At Ser-597 the chain carries Phosphoserine. Residue Lys-602 forms a Glycyl lysine isopeptide (Lys-Gly) (interchain with G-Cter in ubiquitin) linkage. The residue at position 616 (Lys-616) is an N6-acetyllysine; alternate. Lys-616 is covalently cross-linked (Glycyl lysine isopeptide (Lys-Gly) (interchain with G-Cter in ubiquitin); alternate). Phosphoserine occurs at positions 620 and 624. Lys-625 carries the N6-acetyllysine modification. Ser-628 carries the phosphoserine modification. Lys-633 bears the N6-acetyllysine; alternate mark. Lys-633 participates in a covalent cross-link: Glycyl lysine isopeptide (Lys-Gly) (interchain with G-Cter in ubiquitin); alternate. Ser-640 carries the phosphoserine modification. At Lys-646 the chain carries N6,N6-dimethyllysine; alternate. 3 positions are modified to N6-acetyllysine; alternate: Lys-646, Lys-652, and Lys-656. Residues Lys-646, Lys-652, and Lys-656 each participate in a glycyl lysine isopeptide (Lys-Gly) (interchain with G-Cter in ubiquitin); alternate cross-link. Ser-659 bears the Phosphoserine mark. An N6-acetyllysine; alternate mark is found at Lys-666, Lys-678, and Lys-682. Residues Lys-666, Lys-678, and Lys-682 each participate in a glycyl lysine isopeptide (Lys-Gly) (interchain with G-Cter in ubiquitin); alternate cross-link. Arg-684 carries the omega-N-methylarginine modification. Ser-687 bears the Phosphoserine mark. A Glycyl lysine isopeptide (Lys-Gly) (interchain with G-Cter in ubiquitin) cross-link involves residue Lys-688. The residue at position 691 (Ser-691) is a Phosphoserine. Lys-704 carries the post-translational modification N6-acetyllysine; alternate. Lys-704 participates in a covalent cross-link: Glycyl lysine isopeptide (Lys-Gly) (interchain with G-Cter in ubiquitin); alternate. Lys-710 is covalently cross-linked (Glycyl lysine isopeptide (Lys-Gly) (interchain with G-Cter in ubiquitin)). Lys-720 is modified (N6-acetyllysine; alternate). A Glycyl lysine isopeptide (Lys-Gly) (interchain with G-Cter in ubiquitin); alternate cross-link involves residue Lys-720. Tyr-729 bears the Phosphotyrosine mark. 2 positions are modified to phosphoserine: Ser-731 and Ser-735. The disordered stretch occupies residues 733-752 (VVSGDTSPRHLSNVSSTGSI). Positions 736–751 (GDTSPRHLSNVSSTGS) are enriched in polar residues. At Thr-738 the chain carries Phosphothreonine. A phosphoserine mark is found at Ser-739, Ser-744, Ser-751, and Ser-757. Phosphothreonine is present on Thr-762.

As to quaternary structure, interacts with MARK1, MARK2, MARK3 and MARK4. Interacts with SQSTM1 when polyubiquitinated. Interacts with PSMC2 through SQSTM1. Interacts with FKBP4. Binds to CSNK1D. Interacts with SGK1. Interacts with EPM2A; the interaction dephosphorylates MAPT at Ser-396. Interacts with PIN1. Interacts with LRRK2. Interacts with LRP1, leading to endocytosis; this interaction is reduced in the presence of LRPAP1/RAP. Polyubiquitinated. Requires functional TRAF6 and may provoke SQSTM1-dependent degradation by the proteasome. In terms of processing, phosphorylation at various serine and threonine residues in S-P or T-P motifs by proline-directed protein kinases (PDPK1, CDK1, CDK5, GSK3, MAPK) (a few sites per protein in interphase, more in mitosis), and at serine residues in K-X-G-S motifs by MAP/microtubule affinity-regulating kinase (MARK1, MARK2, MARK3 or MARK4), causing detachment from microtubules, and their disassembly. Phosphorylation at Ser-597 by BRSK1 and BRSK2 in neurons affects ability to bind microtubules and plays a role in neuron polarization. Phosphorylation at Ser-214 by SGK1 mediates microtubule depolymerization and neurite formation in hippocampal neurons. Phosphorylated by PHK. Dephosphorylation at several serine and threonine residues by the serine/threonine phosphatase PPP5C.

The protein resides in the cytoplasm. The protein localises to the cytosol. It is found in the cell membrane. Its subcellular location is the cytoskeleton. It localises to the cell projection. The protein resides in the axon. The protein localises to the dendrite. Promotes microtubule assembly and stability, and might be involved in the establishment and maintenance of neuronal polarity. The C-terminus binds axonal microtubules while the N-terminus binds neural plasma membrane components, suggesting that tau functions as a linker protein between both. Axonal polarity is predetermined by tau localization (in the neuronal cell) in the domain of the cell body defined by the centrosome. The short isoforms allow plasticity of the cytoskeleton whereas the longer isoforms may preferentially play a role in its stabilization. The sequence is that of Microtubule-associated protein tau (MAPT) from Gorilla gorilla gorilla (Western lowland gorilla).